Here is a 114-residue protein sequence, read N- to C-terminus: Nucleoid-associated protein Amet_4780 (114 aa).

The interval 23–42 (QKMQKDMEKTQAALEEKEVE) is disordered. Basic and acidic residues predominate over residues 25–42 (MQKDMEKTQAALEEKEVE).

This sequence belongs to the YbaB/EbfC family. As to quaternary structure, homodimer.

The protein resides in the cytoplasm. It localises to the nucleoid. Binds to DNA and alters its conformation. May be involved in regulation of gene expression, nucleoid organization and DNA protection. In Alkaliphilus metalliredigens (strain QYMF), this protein is Nucleoid-associated protein Amet_4780.